We begin with the raw amino-acid sequence, 73 residues long: Acyl carrier protein (73 aa).

Positions 1-73 constitute a Carrier domain; it reads MAVFEKVQDI…DLVKYVENNK (73 aa). S35 carries the O-(pantetheine 4'-phosphoryl)serine modification.

This sequence belongs to the acyl carrier protein (ACP) family. Post-translationally, 4'-phosphopantetheine is transferred from CoA to a specific serine of apo-ACP by AcpS. This modification is essential for activity because fatty acids are bound in thioester linkage to the sulfhydryl of the prosthetic group.

It is found in the cytoplasm. It functions in the pathway lipid metabolism; fatty acid biosynthesis. Its function is as follows. Carrier of the growing fatty acid chain in fatty acid biosynthesis. The polypeptide is Acyl carrier protein (Lactococcus lactis subsp. lactis (strain IL1403) (Streptococcus lactis)).